We begin with the raw amino-acid sequence, 648 residues long: Probable LRR receptor-like serine/threonine-protein kinase At4g30520 (648 aa).

Residues 1–30 form the signal peptide; it reads MVVVTKKTMKIQIHLLYSFLFLCFSTLTLS. The Extracellular segment spans residues 31–238; that stretch reads SEPRNPEVEA…SSSGRRSNRL (208 aa). Asn-99 and Asn-112 each carry an N-linked (GlcNAc...) asparagine glycan. LRR repeat units follow at residues 100-125, 127-148, 149-172, and 174-199; these read LTNLRQVSLQNNNISGKIPPELGFLP, LQTLDLSNNRFSGDIPVSIDQL, SSLQYLRLNNNSLSGPFPASLSQI, and HLSFLDLSYNNLSGPVPKFPARTFNV. N-linked (GlcNAc...) asparagine glycans are attached at residues Asn-158 and Asn-184. The helical transmembrane segment at 239 to 259 threads the bilayer; the sequence is AIALSVSLGSVVILVLALGSF. At 260–648 the chain is on the cytoplasmic side; that stretch reads CWYRKKQRRL…SFAMELSGPR (389 aa). At Thr-300 the chain carries Phosphothreonine. One can recognise a Protein kinase domain in the interval 303–582; it reads FSSKNILGAG…EGDGLAERWA (280 aa). 309-317 contacts ATP; that stretch reads LGAGGFGNV. Thr-326 is modified (phosphothreonine). Lys-331 provides a ligand contact to ATP. Phosphoserine is present on residues Ser-384 and Ser-387. Catalysis depends on Asp-426, which acts as the Proton acceptor. Residues Thr-459, Thr-460, and Thr-465 each carry the phosphothreonine modification. Tyr-473 bears the Phosphotyrosine mark. At Ser-475 the chain carries Phosphoserine. Thr-476 bears the Phosphothreonine mark. Phosphoserine is present on Ser-480. At Thr-555 the chain carries Phosphothreonine.

The protein belongs to the protein kinase superfamily. Ser/Thr protein kinase family.

The protein localises to the cell membrane. It catalyses the reaction L-seryl-[protein] + ATP = O-phospho-L-seryl-[protein] + ADP + H(+). The enzyme catalyses L-threonyl-[protein] + ATP = O-phospho-L-threonyl-[protein] + ADP + H(+). The polypeptide is Probable LRR receptor-like serine/threonine-protein kinase At4g30520 (Arabidopsis thaliana (Mouse-ear cress)).